The chain runs to 170 residues: Shikimate kinase (170 aa).

15-20 (GAGKTT) is a binding site for ATP. Mg(2+) is bound at residue Thr-19. 3 residues coordinate substrate: Asp-37, Arg-61, and Gly-83. Arg-121 serves as a coordination point for ATP. Residue Arg-140 coordinates substrate.

This sequence belongs to the shikimate kinase family. As to quaternary structure, monomer. Mg(2+) is required as a cofactor.

Its subcellular location is the cytoplasm. It carries out the reaction shikimate + ATP = 3-phosphoshikimate + ADP + H(+). It participates in metabolic intermediate biosynthesis; chorismate biosynthesis; chorismate from D-erythrose 4-phosphate and phosphoenolpyruvate: step 5/7. Catalyzes the specific phosphorylation of the 3-hydroxyl group of shikimic acid using ATP as a cosubstrate. The protein is Shikimate kinase of Neisseria meningitidis serogroup C (strain 053442).